The primary structure comprises 303 residues: DCN1-like protein 3 (303 aa).

The interval 1-40 is disordered; the sequence is MGQCVTKCKNPSSTLGSKNGERESSKPHKRSSSHKEEHMS. Residue G2 is the site of N-myristoyl glycine attachment. Residues 85–277 form the DCUN1 domain; that stretch reads SSLQRIEELF…LFDTFVEWEM (193 aa).

In terms of assembly, may interact (via the DCUN1 domain) with unneddylated cullins.

Its subcellular location is the cell membrane. The protein localises to the cytoplasm. It localises to the nucleus. It is found in the perinuclear region. In terms of biological role, contributes to the neddylation of all cullins by transferring NEDD8 from N-terminally acetylated NEDD8-conjugating E2s enzyme to different cullin C-terminal domain-RBX complexes. At the cell membrane, can promote and as well inhibit cullins neddylation. The protein is DCN1-like protein 3 of Xenopus laevis (African clawed frog).